A 281-amino-acid polypeptide reads, in one-letter code: Release factor glutamine methyltransferase (281 aa).

S-adenosyl-L-methionine is bound by residues glutamate 142 and asparagine 184. Position 184–187 (184–187) interacts with substrate; sequence NPPY. The disordered stretch occupies residues 261 to 281; that stretch reads AADHPDLNNRPRFATARKALP.

This sequence belongs to the protein N5-glutamine methyltransferase family. PrmC subfamily.

It catalyses the reaction L-glutaminyl-[peptide chain release factor] + S-adenosyl-L-methionine = N(5)-methyl-L-glutaminyl-[peptide chain release factor] + S-adenosyl-L-homocysteine + H(+). Its function is as follows. Methylates the class 1 translation termination release factors RF1/PrfA and RF2/PrfB on the glutamine residue of the universally conserved GGQ motif. The protein is Release factor glutamine methyltransferase of Streptomyces coelicolor (strain ATCC BAA-471 / A3(2) / M145).